The chain runs to 222 residues: 7-cyano-7-deazaguanine synthase (222 aa).

8 to 18 (LSGGLDSTTCL) is a binding site for ATP. The Zn(2+) site is built by cysteine 186, cysteine 194, cysteine 197, and cysteine 200.

Belongs to the QueC family. As to quaternary structure, homodimer. It depends on Zn(2+) as a cofactor.

It carries out the reaction 7-carboxy-7-deazaguanine + NH4(+) + ATP = 7-cyano-7-deazaguanine + ADP + phosphate + H2O + H(+). It functions in the pathway purine metabolism; 7-cyano-7-deazaguanine biosynthesis. In terms of biological role, catalyzes the ATP-dependent conversion of 7-carboxy-7-deazaguanine (CDG) to 7-cyano-7-deazaguanine (preQ(0)). The polypeptide is 7-cyano-7-deazaguanine synthase (Acetivibrio thermocellus (strain ATCC 27405 / DSM 1237 / JCM 9322 / NBRC 103400 / NCIMB 10682 / NRRL B-4536 / VPI 7372) (Clostridium thermocellum)).